Consider the following 464-residue polypeptide: Chitotriosidase-1 (464 aa).

The N-terminal stretch at 1-21 (MVQSLAWAGVMTLLMVQWGSA) is a signal peptide. Residues 22 to 386 (AKLVCYLTNW…RTLRQELNLP (365 aa)) form the GH18 domain. Cysteine 26 and cysteine 51 are joined by a disulfide. Residues 70 to 71 (EH) and 97 to 100 (GGWT) contribute to the chitin site. Residue glutamate 140 is the Proton donor of the active site. Chitin is bound at residue 210–213 (MAYD). Cysteine 307 and cysteine 368 are disulfide-bonded. The interval 385-416 (LPSETPRSPEQIIPEPRPSSMPEQGPSPGLDN) is disordered. The region spanning 415 to 464 (DNFCQGKADGVYPNPGDESTYYNCGGGRLFQQSCPPGLVFRASCKCCTWS) is the Chitin-binding type-2 domain. The cysteines at positions 448 and 461 are disulfide-linked.

Belongs to the glycosyl hydrolase 18 family. Chitinase class II subfamily. Monomer. In terms of tissue distribution, highly expressed in tongue, stomach, kidney, brain, skin, testis, and bone marrow. Low level of expression was found in lung, heart, spleen, small intestine, and liver. Not detectable in pancreas, salivary gland, large intestine, uterus, or peripheral blood mononuclear cells (PBMC).

The protein resides in the secreted. It is found in the lysosome. It catalyses the reaction Random endo-hydrolysis of N-acetyl-beta-D-glucosaminide (1-&gt;4)-beta-linkages in chitin and chitodextrins.. Degrades chitin, chitotriose and chitobiose. May participate in the defense against nematodes and other pathogens. The sequence is that of Chitotriosidase-1 (Chit1) from Mus musculus (Mouse).